A 284-amino-acid chain; its full sequence is Nitrogenase iron protein 1 (284 aa).

17-24 provides a ligand contact to ATP; sequence GKGGIGKS. Residue C105 participates in [4Fe-4S] cluster binding. An ADP-ribosylarginine; by dinitrogenase reductase ADP-ribosyltransferase modification is found at R108. C140 contributes to the [4Fe-4S] cluster binding site.

It belongs to the NifH/BchL/ChlL family. In terms of assembly, homodimer. Requires [4Fe-4S] cluster as cofactor. Post-translationally, the reversible ADP-ribosylation of Arg-108 inactivates the nitrogenase reductase and regulates nitrogenase activity.

The enzyme catalyses N2 + 8 reduced [2Fe-2S]-[ferredoxin] + 16 ATP + 16 H2O = H2 + 8 oxidized [2Fe-2S]-[ferredoxin] + 2 NH4(+) + 16 ADP + 16 phosphate + 6 H(+). Functionally, the key enzymatic reactions in nitrogen fixation are catalyzed by the nitrogenase complex, which has 2 components: the iron protein and the molybdenum-iron protein. The protein is Nitrogenase iron protein 1 (nifH1) of Methanothermococcus thermolithotrophicus (Methanococcus thermolithotrophicus).